A 101-amino-acid chain; its full sequence is Apolipoprotein C-II (101 aa).

An N-terminal signal peptide occupies residues 1 to 22; that stretch reads MGTRFLLALFLVLLVLGFEVQG. Positions 66–74 are lipid binding; sequence TVDEKLRDM. The segment at 78–101 is lipoprotein lipase cofactor; the sequence is STAAMSTYAGILTDQVLSMLKGEE.

This sequence belongs to the apolipoprotein C2 family. Post-translationally, proapolipoprotein C-II is synthesized as a sialic acid containing glycoprotein which is subsequently desialylated prior to its proteolytic processing. In terms of processing, proapolipoprotein C-II, the major form found in plasma undergoes proteolytic cleavage of its N-terminal hexapeptide to generate apolipoprotein C-II, which occurs as the minor form in plasma.

The protein resides in the secreted. Component of chylomicrons, very low-density lipoproteins (VLDL), low-density lipoproteins (LDL), and high-density lipoproteins (HDL) in plasma. Plays an important role in lipoprotein metabolism as an activator of lipoprotein lipase. Both proapolipoprotein C-II and apolipoprotein C-II can activate lipoprotein lipase. This is Apolipoprotein C-II (APOC2) from Aotus nancymaae (Ma's night monkey).